We begin with the raw amino-acid sequence, 261 residues long: uncharacterized protein (261 aa).

An ATP-binding site is contributed by 41 to 48; the sequence is GKSGSGKS.

It belongs to the IIV-6 075L family.

This is an uncharacterized protein from Invertebrate iridescent virus 3 (IIV-3).